We begin with the raw amino-acid sequence, 188 residues long: Elongation factor P (188 aa).

It belongs to the elongation factor P family.

The protein resides in the cytoplasm. It functions in the pathway protein biosynthesis; polypeptide chain elongation. Involved in peptide bond synthesis. Stimulates efficient translation and peptide-bond synthesis on native or reconstituted 70S ribosomes in vitro. Probably functions indirectly by altering the affinity of the ribosome for aminoacyl-tRNA, thus increasing their reactivity as acceptors for peptidyl transferase. This Wolbachia pipientis wMel protein is Elongation factor P.